A 357-amino-acid polypeptide reads, in one-letter code: MAWEHLRVTDTPTWPSILGRLTTGQNLGTGQAAWAMDQIMTGTATPAQIAGFAVAMKLKRPTSAEVTELADVMLKHARRIPTDIIGNETVDIVGTGGDGANTVNLSTMAAIVVAAAGVPVMKHGNRAASSLSGGADTLEALGVRIDLGPEQVAASVAEVGIGFAFANQFHPSYKHASAVRRELGVPTVFNLLGPLTNPARPRAGLIGCAWAELAEVMAGVFASRNSSVLVVHGDDGLDELTTTTTSTIWRVQAGTVERLTFDPAAFGFQRAHLSELVGGDAEYNAAEVRAVLGGAKGAVRDAVVLNAAGALVAHAGLSSDAKWVPAWEAGLARATETIDSGAAEKLLARWVRFTQKL.

Residues Gly-94, 97 to 98, Thr-102, 104 to 107, 122 to 130, and Gly-134 contribute to the 5-phospho-alpha-D-ribose 1-diphosphate site; these read GD, NLST, and KHGNRAASS. Residue Gly-94 participates in anthranilate binding. Ser-106 contributes to the Mg(2+) binding site. Residue Asn-125 coordinates anthranilate. Arg-180 is a binding site for anthranilate. The Mg(2+) site is built by Asp-238 and Glu-239.

Belongs to the anthranilate phosphoribosyltransferase family. As to quaternary structure, homodimer. Requires Mg(2+) as cofactor.

It carries out the reaction N-(5-phospho-beta-D-ribosyl)anthranilate + diphosphate = 5-phospho-alpha-D-ribose 1-diphosphate + anthranilate. It functions in the pathway amino-acid biosynthesis; L-tryptophan biosynthesis; L-tryptophan from chorismate: step 2/5. Its function is as follows. Catalyzes the transfer of the phosphoribosyl group of 5-phosphorylribose-1-pyrophosphate (PRPP) to anthranilate to yield N-(5'-phosphoribosyl)-anthranilate (PRA). The protein is Anthranilate phosphoribosyltransferase of Mycobacterium sp. (strain KMS).